Reading from the N-terminus, the 236-residue chain is MVNNINWVKLPVILDRLLRHPLLTDLNLETAIQYTLDFISAMGLPNVYVDKIETIDIKEYRGELPCDLISINQVRLHKNGIALRAMTDNFNAYPTHDHKEGDWYERGEPSFKTQGRVIFTSIKHEKVDISYKAIMLDDEGLPLIPDNPIFLKTLELYIKKEWFTILFDMGKISPAVLNNTQQEYAFKAGQCNNEFVIPSVSEMEAITNMWNQLIPRVTEFRRGFKNLGDKEYIRVH.

In terms of assembly, homododecamer.

It localises to the virion. In terms of biological role, forms the tail multi-ring barrel with ring protein 2, ring protein 3 and ring protein 4. This chain is Ring protein 1, found in Bacteroides intestinalis (Bacteroides phage PhiCrAss001).